The sequence spans 300 residues: UDP-N-acetylenolpyruvoylglucosamine reductase (300 aa).

Positions 28–190 constitute an FAD-binding PCMH-type domain; the sequence is KIGGRVKYLV…TRAMMSFKKE (163 aa). R169 is an active-site residue. The active-site Proton donor is the S219. Residue E290 is part of the active site.

The protein belongs to the MurB family. FAD is required as a cofactor.

Its subcellular location is the cytoplasm. It carries out the reaction UDP-N-acetyl-alpha-D-muramate + NADP(+) = UDP-N-acetyl-3-O-(1-carboxyvinyl)-alpha-D-glucosamine + NADPH + H(+). The protein operates within cell wall biogenesis; peptidoglycan biosynthesis. In terms of biological role, cell wall formation. This chain is UDP-N-acetylenolpyruvoylglucosamine reductase, found in Thermotoga sp. (strain RQ2).